The primary structure comprises 106 residues: PTS system N,N'-diacetylchitobiose-specific EIIB component (106 aa).

In terms of domain architecture, PTS EIIB type-3 spans 3 to 106 (KKHIYLFCSA…VAAIKKAAAN (104 aa)). Cysteine 10 acts as the Phosphocysteine intermediate in catalysis. Position 10 is a phosphocysteine; by EIIA (cysteine 10).

As to quaternary structure, forms a complex with ChbA (EIIA). ChbB is a monomer in both its unphosphorylated and phosphorylated forms.

It localises to the cytoplasm. It carries out the reaction N,N'-diacetylchitobiose(out) + N(pros)-phospho-L-histidyl-[protein] = diacetylchitobiose-6'-phosphate(in) + L-histidyl-[protein]. In terms of biological role, the phosphoenolpyruvate-dependent sugar phosphotransferase system (sugar PTS), a major carbohydrate active transport system, catalyzes the phosphorylation of incoming sugar substrates concomitantly with their translocation across the cell membrane. The enzyme II ChbABC PTS system is involved in the transport of the chitin disaccharide N,N'-diacetylchitobiose (GlcNAc2). This is PTS system N,N'-diacetylchitobiose-specific EIIB component (chbB) from Escherichia coli O157:H7.